Reading from the N-terminus, the 244-residue chain is 1-(5-phosphoribosyl)-5-[(5-phosphoribosylamino)methylideneamino] imidazole-4-carboxamide isomerase (244 aa).

Asp10 acts as the Proton acceptor in catalysis. The active-site Proton donor is Asp129.

Belongs to the HisA/HisF family.

It localises to the cytoplasm. It catalyses the reaction 1-(5-phospho-beta-D-ribosyl)-5-[(5-phospho-beta-D-ribosylamino)methylideneamino]imidazole-4-carboxamide = 5-[(5-phospho-1-deoxy-D-ribulos-1-ylimino)methylamino]-1-(5-phospho-beta-D-ribosyl)imidazole-4-carboxamide. Its pathway is amino-acid biosynthesis; L-histidine biosynthesis; L-histidine from 5-phospho-alpha-D-ribose 1-diphosphate: step 4/9. The polypeptide is 1-(5-phosphoribosyl)-5-[(5-phosphoribosylamino)methylideneamino] imidazole-4-carboxamide isomerase (Rhodococcus erythropolis (strain PR4 / NBRC 100887)).